The chain runs to 271 residues: MKLVFYGAGNMAQAIFTGIINSNNLNANDIYLTNKSNEQALKSFAEKLGVNYSYDDEALLKDADYVFLGTKPHDFENLANRIREHITNDNRFISIMAGLSIDYIRQQLNTNNPLARIMPNTNAQVGHSVTGISFSNNFDPKSKNEVDELINAFGSVIEVSEEHLHQVTAITGSGPAFLYHVFEQYVKAGTELGLERNQVEESIRNLIIGTSKMIERSDLSMSQLRKNITSKGGTTQAGLDALSQYDIVSMFEDCLGAAVNRSMELSHKEDE.

Belongs to the pyrroline-5-carboxylate reductase family.

It is found in the cytoplasm. The enzyme catalyses L-proline + NADP(+) = (S)-1-pyrroline-5-carboxylate + NADPH + 2 H(+). The catalysed reaction is L-proline + NAD(+) = (S)-1-pyrroline-5-carboxylate + NADH + 2 H(+). It functions in the pathway amino-acid biosynthesis; L-proline biosynthesis; L-proline from L-glutamate 5-semialdehyde: step 1/1. In terms of biological role, catalyzes the reduction of 1-pyrroline-5-carboxylate (PCA) to L-proline. The polypeptide is Pyrroline-5-carboxylate reductase (Staphylococcus epidermidis (strain ATCC 35984 / DSM 28319 / BCRC 17069 / CCUG 31568 / BM 3577 / RP62A)).